The following is a 241-amino-acid chain: Methylthioribulose-1-phosphate dehydratase (241 aa).

C96 contributes to the substrate binding site. Zn(2+) is bound by residues H114 and H116. Residue E138 is the Proton donor/acceptor of the active site. Residue H194 participates in Zn(2+) binding.

It belongs to the aldolase class II family. MtnB subfamily. Homotetramer. Interacts with APAF1. May interact with CASP1. Requires Zn(2+) as cofactor. In terms of tissue distribution, expressed in skeletal muscle (at protein level).

The protein localises to the cytoplasm. The enzyme catalyses 5-(methylsulfanyl)-D-ribulose 1-phosphate = 5-methylsulfanyl-2,3-dioxopentyl phosphate + H2O. It participates in amino-acid biosynthesis; L-methionine biosynthesis via salvage pathway; L-methionine from S-methyl-5-thio-alpha-D-ribose 1-phosphate: step 2/6. Functionally, catalyzes the dehydration of methylthioribulose-1-phosphate (MTRu-1-P) into 2,3-diketo-5-methylthiopentyl-1-phosphate (DK-MTP-1-P). Functions in the methionine salvage pathway, which plays a key role in cancer, apoptosis, microbial proliferation and inflammation. May inhibit the CASP1-related inflammatory response (pyroptosis), the CASP9-dependent apoptotic pathway and the cytochrome c-dependent and APAF1-mediated cell death. This Mus musculus (Mouse) protein is Methylthioribulose-1-phosphate dehydratase.